Reading from the N-terminus, the 291-residue chain is Small ribosomal subunit biogenesis GTPase RsgA 1 (291 aa).

A CP-type G domain is found at 63–221 (ENALVRPPVA…VADTPGFSSI (159 aa)). GTP is bound by residues 112–115 (SKMD) and 164–172 (GQSGVGKST). 4 residues coordinate Zn(2+): C245, C250, H252, and C258.

This sequence belongs to the TRAFAC class YlqF/YawG GTPase family. RsgA subfamily. Monomer. Associates with 30S ribosomal subunit, binds 16S rRNA. Zn(2+) serves as cofactor.

It localises to the cytoplasm. Its function is as follows. One of several proteins that assist in the late maturation steps of the functional core of the 30S ribosomal subunit. Helps release RbfA from mature subunits. May play a role in the assembly of ribosomal proteins into the subunit. Circularly permuted GTPase that catalyzes slow GTP hydrolysis, GTPase activity is stimulated by the 30S ribosomal subunit. The protein is Small ribosomal subunit biogenesis GTPase RsgA 1 of Listeria monocytogenes serotype 4b (strain F2365).